The following is a 172-amino-acid chain: Photosystem I assembly protein Ycf3 (172 aa).

TPR repeat units lie at residues 35 to 70 (AFTYYRDGAIMLAQSEGNYAEALQNYYEATRLEIDP), 74 to 107 (SYILYNIGLIHTSNGEHTKALEYYFRALERNPFL), and 122 to 155 (GEQAILQGDSEIAEAWFDQAAEYWKQAIALTPGN).

It belongs to the Ycf3 family.

The protein localises to the plastid. The protein resides in the chloroplast thylakoid membrane. Essential for the assembly of the photosystem I (PSI) complex. May act as a chaperone-like factor to guide the assembly of the PSI subunits. The protein is Photosystem I assembly protein Ycf3 of Sorghum bicolor (Sorghum).